Reading from the N-terminus, the 774-residue chain is E3 ubiquitin-protein ligase UHRF1 (774 aa).

The Ubiquitin-like domain maps to 1 to 78 (MWIQVRTMDG…IQLLVRQSLA (78 aa)). Phosphoserine occurs at positions 76, 91, 93, 95, and 161. The segment at 83 to 120 (TKERDSELSDSDSGYGVGHSESDKSSTHGEGTADGDDK) is disordered. 2 tudor-like regions span residues 129 to 205 (GLYK…ARAR) and 212 to 280 (DLEV…IELP). A Glycyl lysine isopeptide (Lys-Gly) (interchain with G-Cter in SUMO2) cross-link involves residue lysine 276. Serine 284 bears the Phosphoserine mark. The tract at residues 293 to 298 (RKSGPS) is linker. Phosphoserine; by PKA is present on serine 295. The segment at 296–363 (GPSCQYCKDD…EWYCPSCRTD (68 aa)) adopts a PHD-type zinc-finger fold. Histone H3R2me0 binding stretches follow at residues 330-334 (CDECD) and 350-352 (PPE). Residue serine 365 is modified to Phosphoserine. Lysine 382 is covalently cross-linked (Glycyl lysine isopeptide (Lys-Gly) (interchain with G-Cter in SUMO2)). Positions 382-605 (KMASATSSSR…QLGLTMQYPE (224 aa)) are methyl-CpG binding and interaction with HDAC1. Lysine 396 is subject to N6-acetyllysine. The region spanning 416–578 (GPIPGVPVGT…FIVWRYLLRR (163 aa)) is the YDG domain. The segment at 442–443 (HV) is required to promote base flipping. DNA contacts are provided by residues 460–461 (AG) and aspartate 466. Required for formation of a 5-methylcytosine-binding pocket regions lie at residues 463-466 (YEDD) and 475-478 (YTGS). Serine 511 bears the Phosphoserine mark. At lysine 542 the chain carries N6-acetyllysine; alternate. Lysine 542 participates in a covalent cross-link: Glycyl lysine isopeptide (Lys-Gly) (interchain with G-Cter in SUMO2); alternate. Residues 616-657 (KNRKRPAKALEQGPSSSKIGKSKRKSTGPATTSPRVSKKSKL) are disordered. At serine 631 the chain carries Phosphoserine; by CDK1. Serine 641 and serine 648 each carry phosphoserine. A Glycyl lysine isopeptide (Lys-Gly) (interchain with G-Cter in SUMO2) cross-link involves residue lysine 656. The segment at 705–744 (CICCQELVFRPVTTVCQHNVCKDCLDRSFRAQVFSCPACR) adopts an RING-type zinc-finger fold. Serine 751 is modified (phosphoserine).

In terms of assembly, interacts with DNMT3A and DNMT3B. Interacts with DNMT1; the interaction is direct. Interacts with USP7; leading to its deubiquitination. Interacts with histone H3. Interacts with HDAC1, but not with HDAC2. Interacts with BLTP3A. Interacts with PML. Interacts with EHMT2. Binds methylated CpG containing oligonucleotides. Interacts with ZNF263; recruited to the SIX3 promoter along with other proteins involved in chromatin modification and transcriptional corepression where it contributes to transcriptional repression. Interacts with UHRF2. Interacts with FANCD2. Interacts with TET1 isoform 2; this interaction induces the recruitment of TET1 isoform 2 to replicating heterochromatin. In terms of processing, phosphorylation at Ser-295 of the linker region decreases the binding to H3K9me3. Phosphorylation at Ser-631 by CDK1 during M phase impairs interaction with USP7, preventing deubiquitination and leading to degradation by the proteasome. Post-translationally, ubiquitinated; which leads to proteasomal degradation. Autoubiquitinated; interaction with USP7 leads to deubiquitination and prevents degradation. Ubiquitination and degradation takes place during M phase, when phosphorylation at Ser-631 prevents interaction with USP7 and subsequent deubiquitination. Polyubiquitination may be stimulated by DNA damage.

It localises to the nucleus. It carries out the reaction S-ubiquitinyl-[E2 ubiquitin-conjugating enzyme]-L-cysteine + [acceptor protein]-L-lysine = [E2 ubiquitin-conjugating enzyme]-L-cysteine + N(6)-ubiquitinyl-[acceptor protein]-L-lysine.. It functions in the pathway protein modification; protein ubiquitination. Its function is as follows. Multidomain protein that acts as a key epigenetic regulator by bridging DNA methylation and chromatin modification. Specifically recognizes and binds hemimethylated DNA at replication forks via its YDG domain and recruits DNMT1 methyltransferase to ensure faithful propagation of the DNA methylation patterns through DNA replication. In addition to its role in maintenance of DNA methylation, also plays a key role in chromatin modification: through its tudor-like regions and PHD-type zinc fingers, specifically recognizes and binds histone H3 trimethylated at 'Lys-9' (H3K9me3) and unmethylated at 'Arg-2' (H3R2me0), respectively, and recruits chromatin proteins. Enriched in pericentric heterochromatin where it recruits different chromatin modifiers required for this chromatin replication. Also localizes to euchromatic regions where it negatively regulates transcription possibly by impacting DNA methylation and histone modifications. Has E3 ubiquitin-protein ligase activity by mediating the ubiquitination of target proteins such as histone H3 and PML. It is still unclear how E3 ubiquitin-protein ligase activity is related to its role in chromatin in vivo. Plays a role in DNA repair by cooperating with UHRF2 to ensure recruitment of FANCD2 to interstrand cross-links (ICLs) leading to FANCD2 activation. Plays a pivotal role in the establishment of correct spindle architecture by catalyzing the 'Lys-63'-linked ubiquitination of KIF11, thereby controlling KIF11 localization on the spindle. This is E3 ubiquitin-protein ligase UHRF1 (Uhrf1) from Rattus norvegicus (Rat).